Here is a 92-residue protein sequence, read N- to C-terminus: Small nuclear ribonucleoprotein E (92 aa).

The Sm domain maps to 18 to 92 (INLIFRYLQN…NITLLQSVSN (75 aa)).

This sequence belongs to the snRNP Sm proteins family. Core component of the spliceosomal U1, U2, U4 and U5 small nuclear ribonucleoproteins (snRNPs), the building blocks of the spliceosome. Most spliceosomal snRNPs contain a common set of Sm proteins, SNRPB, SNRPD1, SNRPD2, SNRPD3, SNRPE, SNRPF and SNRPG that assemble in a heptameric protein ring on the Sm site of the small nuclear RNA to form the core snRNP. Component of the U1 snRNP. The U1 snRNP is composed of the U1 snRNA and the 7 core Sm proteins SNRPB, SNRPD1, SNRPD2, SNRPD3, SNRPE, SNRPF and SNRPG, and at least three U1 snRNP-specific proteins SNRNP70/U1-70K, SNRPA/U1-A and SNRPC/U1-C. Component of the U4/U6-U5 tri-snRNP complex composed of the U4, U6 and U5 snRNAs and at least PRPF3, PRPF4, PRPF6, PRPF8, PRPF31, SNRNP200, TXNL4A, SNRNP40, SNRPB, SNRPD1, SNRPD2, SNRPD3, SNRPE, SNRPF, SNRPG, DDX23, CD2BP2, PPIH, SNU13, EFTUD2, SART1 and USP39, plus LSM2, LSM3, LSM4, LSM5, LSM6, LSM7 and LSM8. Component of the U7 snRNP complex, or U7 Sm protein core complex, that is composed of the U7 snRNA and at least LSM10, LSM11, SNRPB, SNRPD3, SNRPE, SNRPF and SNRPG; the complex does not contain SNRPD1 and SNRPD2. Component of the minor spliceosome, which splices U12-type introns. Part of the SMN-Sm complex that contains SMN1, GEMIN2/SIP1, DDX20/GEMIN3, GEMIN4, GEMIN5, GEMIN6, GEMIN7, GEMIN8, STRAP/UNRIP and the Sm proteins SNRPB, SNRPD1, SNRPD2, SNRPD3, SNRPE, SNRPF and SNRPG; catalyzes core snRNPs assembly. Forms a 6S pICln-Sm complex composed of CLNS1A/pICln, SNRPD1, SNRPD2, SNRPE, SNRPF and SNRPG; ring-like structure where CLNS1A/pICln mimics additional Sm proteins and which is unable to assemble into the core snRNP. Interacts with SMN1; the interaction is direct. Interacts with GEMIN2 (via N-terminus); the interaction is direct. Interacts with SNRPF; the interaction is direct. Interacts with SNRPG; the interaction is direct.

The protein localises to the cytoplasm. The protein resides in the cytosol. It localises to the nucleus. Functionally, plays a role in pre-mRNA splicing as a core component of the spliceosomal U1, U2, U4 and U5 small nuclear ribonucleoproteins (snRNPs), the building blocks of the spliceosome. Component of both the pre-catalytic spliceosome B complex and activated spliceosome C complexes. As a component of the minor spliceosome, involved in the splicing of U12-type introns in pre-mRNAs. As part of the U7 snRNP it is involved in histone 3'-end processing. In Bos taurus (Bovine), this protein is Small nuclear ribonucleoprotein E (SNRPE).